The chain runs to 244 residues: Mediator of RNA polymerase II transcription subunit 19 (244 aa).

2 disordered regions span residues 1-56 (MENF…PGAD) and 171-244 (PKKK…SSLR). A compositionally biased stretch (pro residues) spans 26–47 (GKPPPPPPPPAGGGPGTAPPPT). Positions 171 to 182 (PKKKNKHKHKQS) are enriched in basic residues. The residue at position 194 (Ser-194) is a Phosphoserine. Basic residues predominate over residues 212–224 (KRKKKEKKKKKNR). Ser-226 carries the post-translational modification Phosphoserine. Residues 234–244 (SSQASSSSSLR) are compositionally biased toward low complexity.

The protein belongs to the Mediator complex subunit 19 family. Component of the Mediator complex, which is composed of MED1, MED4, MED6, MED7, MED8, MED9, MED10, MED11, MED12, MED13, MED13L, MED14, MED15, MED16, MED17, MED18, MED19, MED20, MED21, MED22, MED23, MED24, MED25, MED26, MED27, MED29, MED30, MED31, CCNC, CDK8 and CDC2L6/CDK11. The MED12, MED13, CCNC and CDK8 subunits form a distinct module termed the CDK8 module. Mediator containing the CDK8 module is less active than Mediator lacking this module in supporting transcriptional activation. Individual preparations of the Mediator complex lacking one or more distinct subunits have been variously termed ARC, CRSP, DRIP, PC2, SMCC and TRAP.

Its subcellular location is the nucleus. Functionally, component of the Mediator complex, a coactivator involved in the regulated transcription of nearly all RNA polymerase II-dependent genes. Mediator functions as a bridge to convey information from gene-specific regulatory proteins to the basal RNA polymerase II transcription machinery. Mediator is recruited to promoters by direct interactions with regulatory proteins and serves as a scaffold for the assembly of a functional preinitiation complex with RNA polymerase II and the general transcription factors. The protein is Mediator of RNA polymerase II transcription subunit 19 (MED19) of Homo sapiens (Human).